The following is a 396-amino-acid chain: Elongation factor Tu (396 aa).

The tr-type G domain occupies 10 to 206; it reads KPHVNVGTIG…ALDTYIPTPE (197 aa). Positions 19-26 are G1; the sequence is GHVDHGKT. 19-26 lines the GTP pocket; sequence GHVDHGKT. Thr26 provides a ligand contact to Mg(2+). Residues 60–64 are G2; the sequence is GITIN. Residues 81–84 are G3; sequence DCPG. Residues 81 to 85 and 136 to 139 each bind GTP; these read DCPGH and NKCD. Positions 136 to 139 are G4; that stretch reads NKCD. Residues 174-176 are G5; that stretch reads SAK.

It belongs to the TRAFAC class translation factor GTPase superfamily. Classic translation factor GTPase family. EF-Tu/EF-1A subfamily. In terms of assembly, monomer.

It is found in the cytoplasm. The enzyme catalyses GTP + H2O = GDP + phosphate + H(+). Its function is as follows. GTP hydrolase that promotes the GTP-dependent binding of aminoacyl-tRNA to the A-site of ribosomes during protein biosynthesis. The sequence is that of Elongation factor Tu from Burkholderia mallei (strain NCTC 10247).